We begin with the raw amino-acid sequence, 310 residues long: Homoserine O-acetyltransferase (310 aa).

Residue C142 is the Acyl-thioester intermediate of the active site. The substrate site is built by K163 and S192. The Proton acceptor role is filled by H235. E237 is an active-site residue. R249 provides a ligand contact to substrate.

Belongs to the MetA family.

It localises to the cytoplasm. It catalyses the reaction L-homoserine + acetyl-CoA = O-acetyl-L-homoserine + CoA. The protein operates within amino-acid biosynthesis; L-methionine biosynthesis via de novo pathway; O-acetyl-L-homoserine from L-homoserine: step 1/1. In terms of biological role, transfers an acetyl group from acetyl-CoA to L-homoserine, forming acetyl-L-homoserine. This is Homoserine O-acetyltransferase from Agathobacter rectalis (strain ATCC 33656 / DSM 3377 / JCM 17463 / KCTC 5835 / VPI 0990) (Eubacterium rectale).